Consider the following 258-residue polypeptide: UPF0246 protein NTHI1156 (258 aa).

This sequence belongs to the UPF0246 family.

This is UPF0246 protein NTHI1156 from Haemophilus influenzae (strain 86-028NP).